Consider the following 214-residue polypeptide: Adenylate kinase (214 aa).

ATP is bound at residue 10–15 (GAGKGT). An NMP region spans residues 30–59 (STGDMLRAAVKAGTPLGLEAKKVMDAGQLV). Residues threonine 31, arginine 36, 57 to 59 (QLV), 85 to 88 (GFPR), and glutamine 92 each bind AMP. The LID stretch occupies residues 122 to 159 (GRRVHPGSGRVYHVVFNPPKVEGKDDVTGEDLAIRPDD). Residues arginine 123 and 132-133 (VY) contribute to the ATP site. Positions 156 and 167 each coordinate AMP. Glutamine 200 is an ATP binding site.

It belongs to the adenylate kinase family. Monomer.

Its subcellular location is the cytoplasm. It catalyses the reaction AMP + ATP = 2 ADP. It participates in purine metabolism; AMP biosynthesis via salvage pathway; AMP from ADP: step 1/1. Its function is as follows. Catalyzes the reversible transfer of the terminal phosphate group between ATP and AMP. Plays an important role in cellular energy homeostasis and in adenine nucleotide metabolism. The polypeptide is Adenylate kinase (Shewanella baltica (strain OS155 / ATCC BAA-1091)).